Here is a 635-residue protein sequence, read N- to C-terminus: Threonine--tRNA ligase (635 aa).

The region spanning 1 to 61 (MINISFPDGS…EHDCKLRILT (61 aa)) is the TGS domain. Positions 242–533 (DHRKIGKELD…LIEEYAGKFP (292 aa)) are catalytic. The Zn(2+) site is built by C333, H384, and H510.

It belongs to the class-II aminoacyl-tRNA synthetase family. In terms of assembly, homodimer. Requires Zn(2+) as cofactor.

Its subcellular location is the cytoplasm. The catalysed reaction is tRNA(Thr) + L-threonine + ATP = L-threonyl-tRNA(Thr) + AMP + diphosphate + H(+). In terms of biological role, catalyzes the attachment of threonine to tRNA(Thr) in a two-step reaction: L-threonine is first activated by ATP to form Thr-AMP and then transferred to the acceptor end of tRNA(Thr). Also edits incorrectly charged L-seryl-tRNA(Thr). In Rickettsia typhi (strain ATCC VR-144 / Wilmington), this protein is Threonine--tRNA ligase.